Here is an 877-residue protein sequence, read N- to C-terminus: DNA polymerase I (877 aa).

One can recognise a 5'-3' exonuclease domain in the interval 180-272 (TPSQFIDLKA…GLEDTLLKEK (93 aa)). One can recognise a 3'-5' exonuclease domain in the interval 312 to 468 (FEIVTDKSSV…AKEKMMAELI (157 aa)).

The protein belongs to the DNA polymerase type-A family. In terms of assembly, single-chain monomer with multiple functions.

The catalysed reaction is DNA(n) + a 2'-deoxyribonucleoside 5'-triphosphate = DNA(n+1) + diphosphate. Its function is as follows. In addition to polymerase activity, this DNA polymerase exhibits 3'-5' and 5'-3' exonuclease activity. This chain is DNA polymerase I (polA), found in Lactococcus lactis subsp. cremoris (strain MG1363).